A 403-amino-acid chain; its full sequence is Succinoglycan biosynthesis protein ExoL (403 aa).

Its subcellular location is the cytoplasm. The protein operates within glycan metabolism; exopolysaccharide biosynthesis. Essential for succinoglycan (EPS I) synthesis and nodule infection. Glycosyltransferase needed for the addition of the third sugar (glucose), catalyzes the formation of a beta-1,4 linkage between the second and third sugars. The chain is Succinoglycan biosynthesis protein ExoL (exoL) from Rhizobium meliloti (strain 1021) (Ensifer meliloti).